Consider the following 148-residue polypeptide: uncharacterized protein (148 aa).

The 62-residue stretch at 4-65 folds into the HTH asnC-type domain; the sequence is MDKVDLQLIK…IPNLEKLNYM (62 aa). The H-T-H motif DNA-binding region spans 23–42; that stretch reads YRELAEMLGTTRQRVARKVD.

This is an uncharacterized protein from Pyrococcus furiosus (strain ATCC 43587 / DSM 3638 / JCM 8422 / Vc1).